Consider the following 170-residue polypeptide: Small ribosomal subunit protein bS16 (170 aa).

The segment at 114–170 (EGGPTTEAAKPKKKAATSGAKKAAKAAEPEAAAPEAAEPEAAAPAEGGEQAESSTES) is disordered. A compositionally biased stretch (low complexity) spans 142 to 170 (PEAAAPEAAEPEAAAPAEGGEQAESSTES).

It belongs to the bacterial ribosomal protein bS16 family.

This is Small ribosomal subunit protein bS16 from Mycobacterium avium (strain 104).